Reading from the N-terminus, the 1157-residue chain is Cell division cycle and apoptosis regulator protein 1 (1157 aa).

Disordered regions lie at residues proline 289–valine 365 and leucine 608–leucine 641. Composition is skewed to basic and acidic residues over residues arginine 300–proline 341 and glutamate 348–proline 359. Positions lysine 601–glutamate 625 form a coiled coil. Residues glycine 617–aspartate 628 are compositionally biased toward acidic residues. The region spanning proline 643–leucine 677 is the SAP domain. Basic and acidic residues-rich tracts occupy residues glutamate 685–lysine 694, glutamate 701–arginine 721, glutamate 804–aspartate 824, and serine 838–tyrosine 861. 2 disordered regions span residues glutamate 685 to arginine 721 and glutamate 804 to lysine 926. The span at arginine 862–aspartate 896 shows a compositional bias: acidic residues. Positions serine 897–lysine 926 are enriched in basic and acidic residues. A coiled-coil region spans residues aspartate 1043–leucine 1128. Serine 1157 bears the Phosphoserine mark.

The protein localises to the cytoplasm. Its subcellular location is the perinuclear region. Functionally, transcriptional coactivator for nuclear receptors which may play an important role in regulating cell growth and apoptosis. The polypeptide is Cell division cycle and apoptosis regulator protein 1 (ccar1) (Xenopus laevis (African clawed frog)).